The sequence spans 115 residues: Anamorsin homolog 1 (115 aa).

A disordered region spans residues 30–115 (VKEATKGEDC…KVKLNLTDDI (86 aa)). Residues cysteine 39, cysteine 46, cysteine 49, and cysteine 51 each contribute to the [2Fe-2S] cluster site. The tract at residues 39-51 (CTTRRRACKNCTC) is fe-S binding site A. Residues cysteine 77, cysteine 80, cysteine 88, and cysteine 91 each contribute to the [4Fe-4S] cluster site. Short sequence motifs (cx2C motif) lie at residues 77 to 80 (CGNC) and 88 to 91 (CATC). Residues 77–91 (CGNCAKGDAFRCATC) form a fe-S binding site B region.

It belongs to the anamorsin family. In terms of assembly, monomer. [2Fe-2S] cluster serves as cofactor. Requires [4Fe-4S] cluster as cofactor.

Its subcellular location is the cytoplasm. It is found in the mitochondrion intermembrane space. Its function is as follows. Component of the cytosolic iron-sulfur (Fe-S) protein assembly (CIA) machinery. Required for the maturation of extramitochondrial Fe-S proteins. Part of an electron transfer chain functioning in an early step of cytosolic Fe-S biogenesis, facilitating the de novo assembly of a [4Fe-4S] cluster on the cytosolic Fe-S scaffold complex. Electrons are transferred from NADPH via a FAD- and FMN-containing diflavin oxidoreductase. Together with the diflavin oxidoreductase, also required for the assembly of the diferric tyrosyl radical cofactor of ribonucleotide reductase (RNR), probably by providing electrons for reduction during radical cofactor maturation in the catalytic small subunit. The polypeptide is Anamorsin homolog 1 (Trypanosoma cruzi (strain CL Brener)).